Here is a 233-residue protein sequence, read N- to C-terminus: Small ribosomal subunit protein uS3 (233 aa).

A KH type-2 domain is found at 39–107 (VRQFLMKKLV…PAQINISEVR (69 aa)).

It belongs to the universal ribosomal protein uS3 family. In terms of assembly, part of the 30S ribosomal subunit. Forms a tight complex with proteins S10 and S14.

Its function is as follows. Binds the lower part of the 30S subunit head. Binds mRNA in the 70S ribosome, positioning it for translation. The sequence is that of Small ribosomal subunit protein uS3 from Buchnera aphidicola subsp. Schizaphis graminum (strain Sg).